The following is a 151-amino-acid chain: Protein PLANT CADMIUM RESISTANCE 1 (151 aa).

Transmembrane regions (helical) follow at residues 31-47 (ITLC…AEIV) and 54-71 (CCAA…TSCG).

It belongs to the cornifelin family. Homopentamer. As to expression, expressed in aerial part, but not in roots. Detected in the guard and mesophyll cells.

The protein resides in the cell membrane. Involved in glutathione-independent cadmium resistance. Reduces cadmium uptake rather than activating efflux, but is not closely coupled to calcium transporter. The protein is Protein PLANT CADMIUM RESISTANCE 1 (PCR1) of Arabidopsis thaliana (Mouse-ear cress).